A 73-amino-acid polypeptide reads, in one-letter code: Large ribosomal subunit protein bL31 (73 aa).

This sequence belongs to the bacterial ribosomal protein bL31 family. Type A subfamily. In terms of assembly, part of the 50S ribosomal subunit.

Binds the 23S rRNA. In Rhodospirillum centenum (strain ATCC 51521 / SW), this protein is Large ribosomal subunit protein bL31.